The sequence spans 570 residues: Protein HEATR9 (570 aa).

This Macaca fascicularis (Crab-eating macaque) protein is Protein HEATR9 (HEATR9).